The primary structure comprises 205 residues: GTP cyclohydrolase-2 (205 aa).

49–53 (RIHSE) contributes to the GTP binding site. The Zn(2+) site is built by Cys-54, Cys-65, and Cys-67. GTP-binding positions include Gln-70, 92 to 94 (EGR), and Thr-114. The active-site Proton acceptor is Asp-126. The Nucleophile role is filled by Arg-128. GTP-binding residues include Thr-149 and Lys-154.

It belongs to the GTP cyclohydrolase II family. Zn(2+) serves as cofactor.

It catalyses the reaction GTP + 4 H2O = 2,5-diamino-6-hydroxy-4-(5-phosphoribosylamino)-pyrimidine + formate + 2 phosphate + 3 H(+). The protein operates within cofactor biosynthesis; riboflavin biosynthesis; 5-amino-6-(D-ribitylamino)uracil from GTP: step 1/4. Catalyzes the conversion of GTP to 2,5-diamino-6-ribosylamino-4(3H)-pyrimidinone 5'-phosphate (DARP), formate and pyrophosphate. This is GTP cyclohydrolase-2 from Shewanella piezotolerans (strain WP3 / JCM 13877).